The sequence spans 201 residues: Putative manganese efflux pump MntP 2 (201 aa).

Helical transmembrane passes span 3–23 (LISV…VSIT), 39–59 (IGLF…SIGI), 65–85 (IAAL…GKMI), 116–136 (LILL…SFAF), 141–161 (IINT…IGVM), and 176–196 (ILGG…HTNI).

The protein belongs to the MntP (TC 9.B.29) family.

It localises to the cell membrane. Probably functions as a manganese efflux pump. The sequence is that of Putative manganese efflux pump MntP 2 from Clostridium botulinum (strain Langeland / NCTC 10281 / Type F).